The sequence spans 195 residues: Large ribosomal subunit protein bL27c (195 aa).

The N-terminal 60 residues, 1 to 60 (MASMAFTLVGAFKGMSLSSPCHSSSSASFLRADRVSLSVGGGVGMGVPMTMPVRRLTIQM), are a transit peptide targeting the chloroplast.

The protein belongs to the bacterial ribosomal protein bL27 family. Part of the 50S ribosomal subunit.

It is found in the plastid. It localises to the chloroplast. In Oryza sativa subsp. japonica (Rice), this protein is Large ribosomal subunit protein bL27c (RPL27).